We begin with the raw amino-acid sequence, 333 residues long: Tetraacyldisaccharide 4'-kinase (333 aa).

Position 55-62 (55-62) interacts with ATP; sequence TIGGNGKT.

Belongs to the LpxK family.

The catalysed reaction is a lipid A disaccharide + ATP = a lipid IVA + ADP + H(+). It participates in glycolipid biosynthesis; lipid IV(A) biosynthesis; lipid IV(A) from (3R)-3-hydroxytetradecanoyl-[acyl-carrier-protein] and UDP-N-acetyl-alpha-D-glucosamine: step 6/6. Its function is as follows. Transfers the gamma-phosphate of ATP to the 4'-position of a tetraacyldisaccharide 1-phosphate intermediate (termed DS-1-P) to form tetraacyldisaccharide 1,4'-bis-phosphate (lipid IVA). The chain is Tetraacyldisaccharide 4'-kinase from Blochmanniella floridana.